The chain runs to 205 residues: Adenylyl-sulfate kinase (205 aa).

Residue 31-38 (GLSGSGKS) coordinates ATP. The Phosphoserine intermediate role is filled by serine 105.

This sequence belongs to the APS kinase family.

The enzyme catalyses adenosine 5'-phosphosulfate + ATP = 3'-phosphoadenylyl sulfate + ADP + H(+). It functions in the pathway sulfur metabolism; hydrogen sulfide biosynthesis; sulfite from sulfate: step 2/3. In terms of biological role, catalyzes the synthesis of activated sulfate. The protein is Adenylyl-sulfate kinase of Shewanella halifaxensis (strain HAW-EB4).